Consider the following 368-residue polypeptide: Mitogen-activated protein kinase HOG1B (368 aa).

The 280-residue stretch at 20-299 folds into the Protein kinase domain; it reads YVNLEPVGMG…ASQALAHPYL (280 aa). Residues 26–34 and Lys-49 contribute to the ATP site; that span reads VGMGAFGLV. Residue Asp-141 is the Proton acceptor of the active site. Phosphothreonine is present on Thr-171. Positions 171-173 match the TXY motif; it reads TGY. At Tyr-173 the chain carries Phosphotyrosine.

This sequence belongs to the protein kinase superfamily. Ser/Thr protein kinase family. MAP kinase subfamily. HOG1 sub-subfamily. Mg(2+) serves as cofactor. Post-translationally, phosphorylated. Dually phosphorylated on Thr-171 and Tyr-173, which activates the enzyme. Rapidly dephosphorylated upon either hypo- or hyperosmotic shock.

The protein resides in the cytoplasm. It localises to the nucleus. It catalyses the reaction L-seryl-[protein] + ATP = O-phospho-L-seryl-[protein] + ADP + H(+). The enzyme catalyses L-threonyl-[protein] + ATP = O-phospho-L-threonyl-[protein] + ADP + H(+). With respect to regulation, activated by tyrosine and threonine phosphorylation. In terms of biological role, mitogen-activated protein kinase involved in a signal transduction pathway that is activated by changes in the osmolarity of the extracellular environment. Controls osmotic regulation of transcription of target genes. This is Mitogen-activated protein kinase HOG1B (HOG1B) from Wallemia ichthyophaga (strain EXF-994 / CBS 113033).